A 537-amino-acid chain; its full sequence is Putative cysteine ligase BshC (537 aa).

Residues 415 to 439 are a coiled coil; sequence EKASNNFINEVEEMKIQQQELYNNL.

This sequence belongs to the BshC family.

Functionally, involved in bacillithiol (BSH) biosynthesis. May catalyze the last step of the pathway, the addition of cysteine to glucosamine malate (GlcN-Mal) to generate BSH. This chain is Putative cysteine ligase BshC, found in Staphylococcus epidermidis (strain ATCC 12228 / FDA PCI 1200).